Reading from the N-terminus, the 208-residue chain is uncharacterized protein (208 aa).

2 disordered regions span residues 74 to 117 and 181 to 208; these read FEYK…RDSP and ESKL…RKFK. Polar residues predominate over residues 184–208; sequence LGSSEDSGTDRFSSNTSGSSGRKFK.

This is an uncharacterized protein from Mus musculus (Mouse).